Consider the following 984-residue polypeptide: Mineralocorticoid receptor (984 aa).

The segment at 1 to 602 is modulating; the sequence is METKGYHSLP…STGSSRPSKI (602 aa). Residues 231–243 show a composition bias toward polar residues; it reads QGTPLTCSPNVEN. 2 disordered regions span residues 231–329 and 347–373; these read QGTP…AAST and GTSA…QEVP. Ser-250, Ser-259, Ser-283, Ser-287, and Ser-299 each carry phosphoserine. Residues 259-291 are compositionally biased toward low complexity; the sequence is SPLSSPLSSMKSSISSPPSHCSVKSPVSSPNNV. The span at 292 to 329 shows a compositional bias: polar residues; the sequence is TLRSSVSSPANINNSRCSVSSPSNTNNRSTLSSPAAST. Cys-603, Cys-606, Cys-620, Cys-623, Cys-639, Cys-645, Cys-655, and Cys-658 together coordinate Zn(2+). 2 consecutive NR C4-type zinc fingers follow at residues 603–623 and 639–663; these read CLVC…CGSC and CAGR…LQKC. Residues 603–668 constitute a DNA-binding region (nuclear receptor); it reads CLVCGDEASG…RLQKCLQAGM (66 aa). The segment at 669-725 is hinge; the sequence is NLGARKSKKLGKLKGIHEEQPQQQQPPPPPPPPQSPEEGTTYIAPAKEPSVNTALVP. Residues 684–710 form a disordered region; sequence IHEEQPQQQQPPPPPPPPQSPEEGTTY. Residues 692-703 are compositionally biased toward pro residues; it reads QQPPPPPPPPQS. One can recognise an NR LBD domain in the interval 726–964; the sequence is QLSTISRALT…EFPAMLVEII (239 aa). Positions 770 and 776 each coordinate 21-hydroxyprogesterone. Positions 770 and 776 each coordinate aldosterone. Progesterone-binding residues include Asn-770 and Gln-776. Residues 782–785 form an important for coactivator binding region; it reads KWAK. 21-hydroxyprogesterone-binding residues include Arg-817 and Thr-945. Arg-817 and Thr-945 together coordinate aldosterone. The progesterone site is built by Arg-817 and Thr-945.

It belongs to the nuclear hormone receptor family. NR3 subfamily. As to quaternary structure, heteromultimeric cytoplasmic complex with HSP90, HSP70, and FKBP4, in the absence of ligand. After ligand binding, it translocates to the nucleus and binds to DNA as a homodimer and as a heterodimer with NR3C1. May interact with HSD11B2 in the absence of ligand. Binds the coactivators NCOA1, NCOA2, TIF1 and NRIP1. Post-translationally, phosphorylated. Ubiquitous. Highly expressed in distal tubules, convoluted tubules and cortical collecting duct in kidney, and in sweat glands. Detected at lower levels in cardiomyocytes, in epidermis and in colon enterocytes.

The protein resides in the cytoplasm. It is found in the nucleus. Its subcellular location is the endoplasmic reticulum membrane. Its function is as follows. Receptor for both mineralocorticoids (MC) such as aldosterone and glucocorticoids (GC) such as corticosterone or cortisol. Binds to mineralocorticoid response elements (MRE) and transactivates target genes. The effect of MC is to increase ion and water transport and thus raise extracellular fluid volume and blood pressure and lower potassium levels. In Homo sapiens (Human), this protein is Mineralocorticoid receptor (NR3C2).